The following is a 728-amino-acid chain: Phosphoribosylformylglycinamidine synthase subunit PurL (728 aa).

Histidine 42 is an active-site residue. Residues tyrosine 45 and lysine 84 each contribute to the ATP site. Glutamate 86 lines the Mg(2+) pocket. Substrate-binding positions include 87 to 90 (SHNH) and arginine 109. Histidine 88 acts as the Proton acceptor in catalysis. Aspartate 110 contributes to the Mg(2+) binding site. Residue glutamine 237 participates in substrate binding. Aspartate 265 is a binding site for Mg(2+). Position 309–311 (309–311 (ESQ)) interacts with substrate. Positions 491 and 528 each coordinate ATP. Mg(2+) is bound at residue asparagine 529. Residue serine 531 coordinates substrate.

It belongs to the FGAMS family. Monomer. Part of the FGAM synthase complex composed of 1 PurL, 1 PurQ and 2 PurS subunits.

It localises to the cytoplasm. It carries out the reaction N(2)-formyl-N(1)-(5-phospho-beta-D-ribosyl)glycinamide + L-glutamine + ATP + H2O = 2-formamido-N(1)-(5-O-phospho-beta-D-ribosyl)acetamidine + L-glutamate + ADP + phosphate + H(+). The protein operates within purine metabolism; IMP biosynthesis via de novo pathway; 5-amino-1-(5-phospho-D-ribosyl)imidazole from N(2)-formyl-N(1)-(5-phospho-D-ribosyl)glycinamide: step 1/2. Functionally, part of the phosphoribosylformylglycinamidine synthase complex involved in the purines biosynthetic pathway. Catalyzes the ATP-dependent conversion of formylglycinamide ribonucleotide (FGAR) and glutamine to yield formylglycinamidine ribonucleotide (FGAM) and glutamate. The FGAM synthase complex is composed of three subunits. PurQ produces an ammonia molecule by converting glutamine to glutamate. PurL transfers the ammonia molecule to FGAR to form FGAM in an ATP-dependent manner. PurS interacts with PurQ and PurL and is thought to assist in the transfer of the ammonia molecule from PurQ to PurL. The protein is Phosphoribosylformylglycinamidine synthase subunit PurL of Campylobacter jejuni subsp. jejuni serotype O:23/36 (strain 81-176).